We begin with the raw amino-acid sequence, 167 residues long: Ribosome maturation factor RimM (167 aa).

In terms of domain architecture, PRC barrel spans 94–165; that stretch reads EHEYYYSDII…TIKITPMEGL (72 aa).

The protein belongs to the RimM family. In terms of assembly, binds ribosomal protein uS19.

It is found in the cytoplasm. An accessory protein needed during the final step in the assembly of 30S ribosomal subunit, possibly for assembly of the head region. Essential for efficient processing of 16S rRNA. May be needed both before and after RbfA during the maturation of 16S rRNA. It has affinity for free ribosomal 30S subunits but not for 70S ribosomes. In Staphylococcus epidermidis (strain ATCC 35984 / DSM 28319 / BCRC 17069 / CCUG 31568 / BM 3577 / RP62A), this protein is Ribosome maturation factor RimM.